The primary structure comprises 447 residues: Glutamine synthetase (447 aa).

Positions R20–G105 constitute a GS beta-grasp domain. The GS catalytic domain occupies P112 to L447. Mg(2+)-binding residues include E135 and E137. E187 contributes to the ATP binding site. E192 and E199 together coordinate Mg(2+). Residues N243–G244 and G244 contribute to the L-glutamate site. H248 lines the Mg(2+) pocket. S252 lines the ATP pocket. Positions 301, 307, and 319 each coordinate L-glutamate. R319 and R324 together coordinate ATP. Residue E336 coordinates Mg(2+). An L-glutamate-binding site is contributed by R338.

This sequence belongs to the glutamine synthetase family. In terms of assembly, homohexamer. Interacts and forms stable complexes with the regulatory protein GlnK1. Mg(2+) serves as cofactor.

It localises to the cytoplasm. It catalyses the reaction L-glutamate + NH4(+) + ATP = L-glutamine + ADP + phosphate + H(+). Its activity is regulated as follows. Directly stimulated by the effector molecule 2-oxoglutarate. Inhibited by GlnK1. 2-oxoglutarate antagonizes the inhibitory effects of GlnK1, but does not prevent GlnK1/GlnA1 complex formation. Its function is as follows. Probably involved in nitrogen metabolism via ammonium assimilation. Catalyzes the ATP-dependent biosynthesis of glutamine from glutamate and ammonia. This chain is Glutamine synthetase, found in Methanosarcina mazei (strain ATCC BAA-159 / DSM 3647 / Goe1 / Go1 / JCM 11833 / OCM 88) (Methanosarcina frisia).